Consider the following 92-residue polypeptide: MTRSIWKGPFIDGYLLKKVDKVREGGRNEVIKMWSRRSTILPQFVGFTFGVYNGQKHVPVSVNEDMVGHKFGEFAPTRTYYGHGADKKAKRK.

Belongs to the universal ribosomal protein uS19 family.

Its function is as follows. Protein S19 forms a complex with S13 that binds strongly to the 16S ribosomal RNA. The polypeptide is Small ribosomal subunit protein uS19 (Mesorhizobium japonicum (strain LMG 29417 / CECT 9101 / MAFF 303099) (Mesorhizobium loti (strain MAFF 303099))).